Consider the following 158-residue polypeptide: Photosystem I assembly protein Ycf3 (158 aa).

TPR repeat units follow at residues 35–68 (AFSY…EEDV), 72–105 (SYII…NPRL), and 113–146 (AVIY…APGQ).

The protein belongs to the Ycf3 family.

Its subcellular location is the plastid. The protein localises to the chloroplast thylakoid membrane. Functionally, essential for the assembly of the photosystem I (PSI) complex. May act as a chaperone-like factor to guide the assembly of the PSI subunits. The polypeptide is Photosystem I assembly protein Ycf3 (Cyanidioschyzon merolae (strain NIES-3377 / 10D) (Unicellular red alga)).